A 362-amino-acid chain; its full sequence is MKLKRMVVGLGERSYPIWIGGGIFSRLPEALQEVNFPKKIAVVSNPLVQSLYGQALADALQSSGYDHHFISIPDGEEHKNWTTLQTIYDGLIAKGFDRHCGLIALGGGVTGDMGGFAAATFLRGIPYIQVPTTLLAQVDSSVGGKTAINHPQGKNLIGAFYQPRHVHIDVDTLQSLDAREFATGMAEVIKYGIIKDKAFFDWLYTHREALQRRDTEALISAVKRACQIKANIVEVDEKEQALRAILNFGHTFGHAIENLSGYQTYRHGEAVAIGMMVAAHVSRRMDLCTADEVGAIERLLQVFDLPVTPPDYSLEAYLEAMQRDKKVQQGKLRLVLNKGIGDCLVQEIDAPAMLFAEALKQF.

NAD(+) is bound by residues 74–79 (DGEEHK), 108–112 (GVTGD), 132–133 (TT), lysine 145, and lysine 154. Zn(2+)-binding residues include glutamate 187, histidine 250, and histidine 267.

The protein belongs to the sugar phosphate cyclases superfamily. Dehydroquinate synthase family. It depends on Co(2+) as a cofactor. Zn(2+) serves as cofactor. Requires NAD(+) as cofactor.

It is found in the cytoplasm. It carries out the reaction 7-phospho-2-dehydro-3-deoxy-D-arabino-heptonate = 3-dehydroquinate + phosphate. It participates in metabolic intermediate biosynthesis; chorismate biosynthesis; chorismate from D-erythrose 4-phosphate and phosphoenolpyruvate: step 2/7. In terms of biological role, catalyzes the conversion of 3-deoxy-D-arabino-heptulosonate 7-phosphate (DAHP) to dehydroquinate (DHQ). In Syntrophotalea carbinolica (strain DSM 2380 / NBRC 103641 / GraBd1) (Pelobacter carbinolicus), this protein is 3-dehydroquinate synthase.